The chain runs to 899 residues: Suppressor of glycerol defect protein 1 (899 aa).

Over residues Gln-24 to Gly-33 the composition is skewed to basic and acidic residues. 2 disordered regions span residues Gln-24–Pro-181 and Glu-248–Glu-326. Over residues Lys-34 to Lys-49 the composition is skewed to basic residues. Residues Arg-65–Thr-77 are compositionally biased toward polar residues. A compositionally biased stretch (acidic residues) spans Asp-103–Gly-126. Basic and acidic residues-rich tracts occupy residues Glu-134–Lys-143, Ser-162–Asn-174, and Ser-251–Ser-264. The segment covering Ser-265–Asp-292 has biased composition (acidic residues). The MIF4G domain occupies Ser-335–Arg-540. In terms of domain architecture, MI spans Asp-644–Phe-781. Residue Ser-736 is modified to Phosphoserine.

The protein belongs to the CWC22 family. Interacts with PLC1.

It is found in the nucleus. Its subcellular location is the nucleolus. In terms of biological role, involved in osmoregulatory glycerol response, probably through its interaction with PLC1 which regulates the expression of GDP1. This is Suppressor of glycerol defect protein 1 (SGD1) from Saccharomyces cerevisiae (strain ATCC 204508 / S288c) (Baker's yeast).